The primary structure comprises 601 residues: Serine/threonine-protein phosphatase 2A 65 kDa regulatory subunit A beta isoform (601 aa).

At alanine 2 the chain carries N-acetylalanine. HEAT repeat units lie at residues 20-58 (DSLY…GVER), 59-96 (TRTE…GGPD), 97-135 (FAHC…TPVA), 136-173 (LEAH…ASNA), 174-212 (VKAE…ELDS), 213-251 (VKTE…SQED), 252-290 (LEAL…GPKI), 291-333 (ALSD…RETV), 334-372 (IMNQ…GKEN), 373-411 (TIEH…GIRQ), 412-450 (LSQS…GVEF), 451-489 (FDEK…GTEW), 490-528 (AQNT…GKEI), 529-567 (TTKQ…DTNA), and 568-601 (LQGE…LALA).

The protein belongs to the phosphatase 2A regulatory subunit A family. PP2A consists of a common heterodimeric core enzyme, composed of a 36 kDa catalytic subunit (subunit C) and a 65 kDa constant regulatory subunit (PR65 or subunit A), that associates with a variety of regulatory subunits. Proteins that associate with the core dimer include three families of regulatory subunits B (the R2/B/PR55/B55, R3/B''/PR72/PR130/PR59 and R5/B'/B56 families), the 48 kDa variable regulatory subunit, viral proteins, and cell signaling molecules. Interacts with IPO9. Interacts with SGO1. Interacts with RAF1.

Functionally, the PR65 subunit of protein phosphatase 2A serves as a scaffolding molecule to coordinate the assembly of the catalytic subunit and a variable regulatory B subunit. The polypeptide is Serine/threonine-protein phosphatase 2A 65 kDa regulatory subunit A beta isoform (Ppp2r1b) (Mus musculus (Mouse)).